A 24-amino-acid polypeptide reads, in one-letter code: Hemocyanin subunit 4e (24 aa).

The protein belongs to the tyrosinase family. Hemocyanin subfamily. Hemolymph.

The protein localises to the secreted. It localises to the extracellular space. Its function is as follows. Hemocyanins are copper-containing oxygen carriers occurring freely dissolved in the hemolymph of many mollusks and arthropods. The protein is Hemocyanin subunit 4e of Maja squinado (Mediterranean spider crab).